The following is an 884-amino-acid chain: Nonsense-mediated mRNA decay factor EBS1 (884 aa).

Disordered regions lie at residues 596–645 and 755–774; these read NSMK…PTMG and QGGL…NSAY. Over residues 633–645 the composition is skewed to polar residues; that stretch reads RSSSLDSFSPTMG. Residues 760-772 are compositionally biased toward low complexity; it reads SSQQPSSMSSLNS.

This sequence belongs to the EST1 family. In terms of assembly, interacts with NMD helicase UPF1. Interacts with CDC33.

Its subcellular location is the nucleus. It localises to the chromosome. The protein resides in the telomere. The protein localises to the cytoplasm. It is found in the P-body. In terms of biological role, plays a role in nonsense-mediated mRNA decay (NMD). Recruits UPF1 to cytoplasmic mRNA decay bodies (P-bodies). Negative regulator of gene expression. Inhibits translation most likely through effects on eIF-4E (CDC33). Involved in telomere maintenance. The sequence is that of Nonsense-mediated mRNA decay factor EBS1 from Saccharomyces cerevisiae (strain ATCC 204508 / S288c) (Baker's yeast).